Reading from the N-terminus, the 504-residue chain is Cytochrome P450 3A2 (504 aa).

Cysteine 443 provides a ligand contact to heme.

It belongs to the cytochrome P450 family. Requires heme as cofactor. As to expression, expressed in liver.

The protein localises to the endoplasmic reticulum membrane. The protein resides in the microsome membrane. The enzyme catalyses an organic molecule + reduced [NADPH--hemoprotein reductase] + O2 = an alcohol + oxidized [NADPH--hemoprotein reductase] + H2O + H(+). Functionally, cytochromes P450 are a group of heme-thiolate monooxygenases. In liver microsomes, this enzyme is involved in an NADPH-dependent electron transport pathway. It oxidizes a variety of structurally unrelated compounds, including steroids, fatty acids, and xenobiotics. The polypeptide is Cytochrome P450 3A2 (Cyp3a2) (Rattus norvegicus (Rat)).